The chain runs to 98 residues: UPF0251 protein Sputw3181_3483 (98 aa).

The protein belongs to the UPF0251 family.

The polypeptide is UPF0251 protein Sputw3181_3483 (Shewanella sp. (strain W3-18-1)).